The sequence spans 1826 residues: 1,3-beta-glucan synthase component bgs3 (1826 aa).

Polar residues predominate over residues 34–43 (QSNDQYNNIQ). A disordered region spans residues 34–90 (QSNDQYNNIQHPAPSFANPFIHEQDDSYSDILEEEPDEDAYDSPERPSSTEEFISQD). Acidic residues predominate over residues 59-75 (DSYSDILEEEPDEDAYD). Helical transmembrane passes span 427–447 (IWIL…PTIY), 465–485 (WCAP…ALIL), 504–524 (LIFV…IFGF), 543–563 (FFFS…FLLG), 597–617 (AALW…FLTL), 637–657 (FMIG…LVYL), and 660–680 (LVLF…MFSI). A Phosphoserine modification is found at S885. 11 helical membrane passes run 1272 to 1292 (VFIM…GAMY), 1329 to 1349 (IISI…HDLL), 1375 to 1397 (VTQN…YIAT), 1417 to 1437 (GSSI…TMTV), 1438 to 1458 (WTTH…CPFI), 1531 to 1551 (IFTE…AYTF), 1571 to 1591 (IWIM…ILLM), 1607 to 1627 (YGAV…VFTF), 1642 to 1662 (VLGC…VVVF), 1701 to 1721 (CKVV…CILF), and 1770 to 1790 (SLLF…PLVL).

Belongs to the glycosyltransferase 48 family. In terms of assembly, component of the 1,3-beta-glucan synthase (GS) complex, composed of at least the alternate catalytic subunits bgs1, bgs2, bgs3, and bgs4, and a regulatory subunit chr4.

Its subcellular location is the membrane. The catalysed reaction is [(1-&gt;3)-beta-D-glucosyl](n) + UDP-alpha-D-glucose = [(1-&gt;3)-beta-D-glucosyl](n+1) + UDP + H(+). In terms of biological role, alternate catalytic subunit of the 1,3-beta-glucan synthase (GS) complex. Synthesizes 1,3-beta-glucan, a major structural component of the yeast cell wall. Required for cell wall biosynthesis and cell elongation. The protein is 1,3-beta-glucan synthase component bgs3 of Schizosaccharomyces pombe (strain 972 / ATCC 24843) (Fission yeast).